A 111-amino-acid polypeptide reads, in one-letter code: MLESHQSTTFGGKVFHYKSFHPNNQLFNLFNQLFLLLLACSLFFKSDSIELRTPLWIFPLFLKNNERPSFISSLRGFLKEVEFLETLNSALRTFEVTAFALAFSKIPSVFL.

This is an uncharacterized protein from Saccharomyces cerevisiae (strain ATCC 204508 / S288c) (Baker's yeast).